Reading from the N-terminus, the 290-residue chain is MNIKRKPEWLRIKLGEGRNLNYVKGLLKKFSLNTVCEEANCPNQIECFSKKTATFMILGSDCSRSCGFCNVSHGALQPIDPNEPENVANAVAELGLKHVVITSVTRDDLADGGAQHFADVVNQIKSKNKETMIEVLIPDFQGNKEALQKVVQSKPDIINHNMETIPRLYPEIRPKAEYVQSLELLKNVKEMDPEILTKSGVMVGLGEGEEELIEVFKDLRGSGCDFLTVGQYLPPSTKHYPLKAYISPEVFERYKEEALKIGFSFVASSPLVRSSYNAAEALEKHEEMKS.

[4Fe-4S] cluster-binding residues include Cys-36, Cys-41, Cys-47, Cys-62, Cys-66, Cys-69, and Ser-275. The Radical SAM core domain maps to 48 to 264; the sequence is FSKKTATFMI…KEEALKIGFS (217 aa).

Belongs to the radical SAM superfamily. Lipoyl synthase family. [4Fe-4S] cluster is required as a cofactor.

The protein localises to the cytoplasm. It catalyses the reaction [[Fe-S] cluster scaffold protein carrying a second [4Fe-4S](2+) cluster] + N(6)-octanoyl-L-lysyl-[protein] + 2 oxidized [2Fe-2S]-[ferredoxin] + 2 S-adenosyl-L-methionine + 4 H(+) = [[Fe-S] cluster scaffold protein] + N(6)-[(R)-dihydrolipoyl]-L-lysyl-[protein] + 4 Fe(3+) + 2 hydrogen sulfide + 2 5'-deoxyadenosine + 2 L-methionine + 2 reduced [2Fe-2S]-[ferredoxin]. Its pathway is protein modification; protein lipoylation via endogenous pathway; protein N(6)-(lipoyl)lysine from octanoyl-[acyl-carrier-protein]: step 2/2. In terms of biological role, catalyzes the radical-mediated insertion of two sulfur atoms into the C-6 and C-8 positions of the octanoyl moiety bound to the lipoyl domains of lipoate-dependent enzymes, thereby converting the octanoylated domains into lipoylated derivatives. The polypeptide is Lipoyl synthase (Alkaliphilus metalliredigens (strain QYMF)).